We begin with the raw amino-acid sequence, 303 residues long: Dihydroorotate dehydrogenase B (NAD(+)), catalytic subunit (303 aa).

Substrate contacts are provided by residues lysine 46, 70–74 (NAIGL), and asparagine 124. Residue 46-47 (KS) participates in FMN binding. FMN is bound at residue asparagine 124. Residue cysteine 127 is the Nucleophile of the active site. Positions 163 and 189 each coordinate FMN. A substrate-binding site is contributed by 190 to 191 (NS). FMN-binding positions include glycine 216, 242-243 (GG), and 264-265 (GT).

The protein belongs to the dihydroorotate dehydrogenase family. Type 1 subfamily. Heterotetramer of 2 PyrK and 2 PyrD type B subunits. FMN serves as cofactor.

The protein resides in the cytoplasm. It carries out the reaction (S)-dihydroorotate + NAD(+) = orotate + NADH + H(+). Its pathway is pyrimidine metabolism; UMP biosynthesis via de novo pathway; orotate from (S)-dihydroorotate (NAD(+) route): step 1/1. Catalyzes the conversion of dihydroorotate to orotate with NAD(+) as electron acceptor. The chain is Dihydroorotate dehydrogenase B (NAD(+)), catalytic subunit (pyrD) from Methanothermobacter thermautotrophicus (strain ATCC 29096 / DSM 1053 / JCM 10044 / NBRC 100330 / Delta H) (Methanobacterium thermoautotrophicum).